Reading from the N-terminus, the 86-residue chain is Small ribosomal subunit protein bS20 (86 aa).

The tract at residues 1–25 is disordered; that stretch reads MANIKSQIKRNKQNEKRHERNKAVK. Over residues 12-22 the composition is skewed to basic and acidic residues; that stretch reads KQNEKRHERNK.

This sequence belongs to the bacterial ribosomal protein bS20 family.

In terms of biological role, binds directly to 16S ribosomal RNA. The sequence is that of Small ribosomal subunit protein bS20 from Nocardioides sp. (strain ATCC BAA-499 / JS614).